Consider the following 377-residue polypeptide: Oleosin-B4 (377 aa).

The polar stretch occupies residues 1-37 (MRNEIQNETAQTDQTQGSMFSFFNLFPFLLPMFEVIK). 3 consecutive transmembrane segments (helical) span residues 16–36 (QGSMFSFFNLFPFLLPMFEVI), 38–58 (MVVASVASVVYLGFAGVTLSG), and 69–89 (LFIIFSPILLPAIAATTVLAA). The segment at 38 to 133 (MVVASVASVV…IIPESIKPSN (96 aa)) is hydrophobic. 3 tandem repeats follow at residues 115–124 (IPESIKPSNI), 125–134 (IPESIKPSNI), and 135–144 (IPEGIKPSNI). The segment at 115 to 144 (IPESIKPSNIIPESIKPSNIIPEGIKPSNI) is 3 X 10 AA tandem repeats of I-P-E-[SG]-I-K-P-S-N-[IV]. Residues 158–377 (KIKAKKEEKS…SSHGSGGKHI (220 aa)) are disordered. 2 stretches are compositionally biased toward basic and acidic residues: residues 162–185 (KKEEKSKGKSEDSSKGKGKSKGED) and 195–231 (DEDKHGSGAKHGKGESKHGKGESTHGKGGKHGSEGKH). The stretch at 196-202 (EDKHGSG) is one 2-1 repeat. The stretch at 196 to 202 (EDKHGSG) is one 2.1 repeat. The interval 196–222 (EDKHGSGAKHGKGESKHGKGESTHGKG) is 3 X 6 AA tandem repeats of E-[SD]-[KT]-H-G-[KS]-G. A 2-2; truncated repeat occupies 204-208 (KHGKG). A run of 7 repeats spans residues 209 to 215 (ESKHGKG), 216 to 222 (ESTHGKG), 230 to 247 (KHGSGGSSMGGGKHGSGG), 260 to 277 (KHESGGSPMGGGKHGSEG), 278 to 295 (KHGSGGASMGGGKHGSGG), 296 to 313 (KHESGGSAMGGGKHGSGG), and 355 to 359 (SSDGS). Positions 230–313 (KHGSGGSSMG…MGGGKHGSGG (84 aa)) are 4 X 18 AA tandem repeats of K-H-E-S-G-G-[SA]-[PSA]-M-G-G-G-K-H-G-S-[GE]-G. Gly residues predominate over residues 232-244 (GSGGSSMGGGKHG). Residues 247 to 263 (GKHETGGKHGSGGKHES) are compositionally biased toward basic and acidic residues. Gly residues-rich tracts occupy residues 280-292 (GSGGASMGGGKHG) and 302-314 (SAMGGGKHGSGGK). Residues 350–369 (SSTSESSDGSSDGSSSDGSS) show a composition bias toward low complexity. The tract at residues 355–368 (SSDGSSDGSSSDGS) is 3 X 5 AA tandem repeats of S-S-D-G-S. The 4-2; truncated repeat unit spans residues 360-363 (SDGS). Residues 364–368 (SSDGS) form a 4-3 repeat.

It belongs to the oleosin family. In terms of tissue distribution, the full-length protein is found in the tapetal lipid bodies of immature anthers, the proteolytically cleaved C-terminal product is found on the coats of pollen grains. No expression is detected in other flower organs, siliques or seedlings.

The protein localises to the lipid droplet. It is found in the membrane. Functionally, many of the major pollen coat proteins are derived from endoproteolytic cleavage of oleosin-like proteins. The sequence is that of Oleosin-B4 from Brassica napus (Rape).